Consider the following 143-residue polypeptide: Transmembrane protein 80 (143 aa).

The next 4 membrane-spanning stretches (helical) occupy residues 22–42, 47–67, 88–108, and 122–142; these read LLCL…LLLV, VFTY…LMGI, LAAS…FLLW, and PLLA…AAFV.

The protein localises to the membrane. The protein resides in the cell projection. It is found in the cilium. The protein is Transmembrane protein 80 (TMEM80) of Bos taurus (Bovine).